A 247-amino-acid polypeptide reads, in one-letter code: MENSPRYREATNLIPSPRCHNSNNSCGMSSSSESNKPPTTPTRHVTTRSESGNPYPTTFVQADTSSFKQVVQMLTGSAERPKHGSSLKPNPTHHQPDPRSTPSSFSIPPIKAVPNKKQSSSSASGFRLYERRNSMKNLKINPLNPVFNPVNSAFSPRKPEILSPSILDFPSLVLSPVTPLIPDPFDRSGSSNQSPNELAAEEKAMKERGFYLHPSPATTPMDPEPRLLPLFPVTSPRVSGSSSASTS.

The segment at 1-128 is disordered; the sequence is MENSPRYREA…SSSSASGFRL (128 aa). Ser-16 is subject to Phosphoserine. Over residues 21-37 the composition is skewed to low complexity; sequence NSNNSCGMSSSSESNKP. Polar residues-rich tracts occupy residues 48-75 and 87-106; these read RSES…QMLT and LKPN…SSFS. A VQ motif is present at residues 67 to 76; it reads FKQVVQMLTG. Phosphoserine is present on residues Ser-106, Ser-155, Ser-163, Ser-165, and Ser-175. Phosphothreonine is present on Thr-178. Positions 184 to 247 are disordered; that stretch reads PFDRSGSSNQ…VSGSSSASTS (64 aa). At Ser-194 the chain carries Phosphoserine. Residues 200–210 show a composition bias toward basic and acidic residues; it reads AEEKAMKERGF. Ser-215 is modified (phosphoserine). A phosphothreonine mark is found at Thr-219 and Thr-234. Phosphoserine occurs at positions 235, 239, and 243. Residues 236–247 are compositionally biased toward polar residues; it reads PRVSGSSSASTS.

Interacts with MPK3 and MPK6. Post-translationally, phosphorylated on serine and threonine residues by MPK6 following treatment with the pathogen-associated molecular pattern (PAMP) flg22. MAP kinase-mediated phosphorylation after PAMP elicitation causes degradation of VQ4, allowing WRKY33 to promote transcription from defense genes.

The protein localises to the nucleus. Its function is as follows. Acts as a negative regulator of WRKY33 transcription factor activity in the promotion of defense gene expression. Acts as a negative regulator of pathogen-associated molecular pattern (PAMP)-induced responses to modulate resistance to pathogens. This is VQ motif-containing protein 4 from Arabidopsis thaliana (Mouse-ear cress).